A 195-amino-acid polypeptide reads, in one-letter code: Nucleoid occlusion factor SlmA (195 aa).

Residues Thr-7–Leu-67 enclose the HTH tetR-type domain. The segment at residues Thr-30–Phe-49 is a DNA-binding region (H-T-H motif). The stretch at Asp-109–Lys-141 forms a coiled coil.

The protein belongs to the nucleoid occlusion factor SlmA family. Homodimer. Interacts with FtsZ.

Its subcellular location is the cytoplasm. The protein localises to the nucleoid. In terms of biological role, required for nucleoid occlusion (NO) phenomenon, which prevents Z-ring formation and cell division over the nucleoid. Acts as a DNA-associated cell division inhibitor that binds simultaneously chromosomal DNA and FtsZ, and disrupts the assembly of FtsZ polymers. SlmA-DNA-binding sequences (SBS) are dispersed on non-Ter regions of the chromosome, preventing FtsZ polymerization at these regions. This is Nucleoid occlusion factor SlmA from Alteromonas mediterranea (strain DSM 17117 / CIP 110805 / LMG 28347 / Deep ecotype).